Reading from the N-terminus, the 175-residue chain is Ribosome maturation factor RimM (175 aa).

Residues 96 to 175 (EEDFYWRDLI…LIQVNWEPDF (80 aa)) enclose the PRC barrel domain.

This sequence belongs to the RimM family. Binds ribosomal protein uS19.

The protein resides in the cytoplasm. Its function is as follows. An accessory protein needed during the final step in the assembly of 30S ribosomal subunit, possibly for assembly of the head region. Essential for efficient processing of 16S rRNA. May be needed both before and after RbfA during the maturation of 16S rRNA. It has affinity for free ribosomal 30S subunits but not for 70S ribosomes. This Psychromonas ingrahamii (strain DSM 17664 / CCUG 51855 / 37) protein is Ribosome maturation factor RimM.